A 398-amino-acid polypeptide reads, in one-letter code: Bifunctional enzyme IspD/IspF (398 aa).

The segment at 1–234 is 2-C-methyl-D-erythritol 4-phosphate cytidylyltransferase; it reads MTNSPRTAAI…SRLMAALGDI (234 aa). The tract at residues 235 to 398 is 2-C-methyl-D-erythritol 2,4-cyclodiphosphate synthase; the sequence is RTGTGYDVHA…LPWGADGLAG (164 aa). A divalent metal cation-binding residues include aspartate 241 and histidine 243. 4-CDP-2-C-methyl-D-erythritol 2-phosphate contacts are provided by residues 241-243 and 267-268; these read DVH and HS. Histidine 275 serves as a coordination point for a divalent metal cation. 4-CDP-2-C-methyl-D-erythritol 2-phosphate contacts are provided by residues 289 to 291, 365 to 368, phenylalanine 372, and arginine 375; these read DIG and TTSE.

The protein in the N-terminal section; belongs to the IspD/TarI cytidylyltransferase family. IspD subfamily. It in the C-terminal section; belongs to the IspF family. A divalent metal cation is required as a cofactor.

The enzyme catalyses 2-C-methyl-D-erythritol 4-phosphate + CTP + H(+) = 4-CDP-2-C-methyl-D-erythritol + diphosphate. It carries out the reaction 4-CDP-2-C-methyl-D-erythritol 2-phosphate = 2-C-methyl-D-erythritol 2,4-cyclic diphosphate + CMP. It participates in isoprenoid biosynthesis; isopentenyl diphosphate biosynthesis via DXP pathway; isopentenyl diphosphate from 1-deoxy-D-xylulose 5-phosphate: step 2/6. Its pathway is isoprenoid biosynthesis; isopentenyl diphosphate biosynthesis via DXP pathway; isopentenyl diphosphate from 1-deoxy-D-xylulose 5-phosphate: step 4/6. Bifunctional enzyme that catalyzes the formation of 4-diphosphocytidyl-2-C-methyl-D-erythritol from CTP and 2-C-methyl-D-erythritol 4-phosphate (MEP) (IspD), and catalyzes the conversion of 4-diphosphocytidyl-2-C-methyl-D-erythritol 2-phosphate (CDP-ME2P) to 2-C-methyl-D-erythritol 2,4-cyclodiphosphate (ME-CPP) with a corresponding release of cytidine 5-monophosphate (CMP) (IspF). The polypeptide is Bifunctional enzyme IspD/IspF (Rhodopseudomonas palustris (strain TIE-1)).